The chain runs to 493 residues: ATP synthase subunit beta, chloroplastic (493 aa).

170-177 lines the ATP pocket; it reads GGAGVGKT.

This sequence belongs to the ATPase alpha/beta chains family. F-type ATPases have 2 components, CF(1) - the catalytic core - and CF(0) - the membrane proton channel. CF(1) has five subunits: alpha(3), beta(3), gamma(1), delta(1), epsilon(1). CF(0) has four main subunits: a(1), b(1), b'(1) and c(9-12).

It is found in the plastid. It localises to the chloroplast thylakoid membrane. It carries out the reaction ATP + H2O + 4 H(+)(in) = ADP + phosphate + 5 H(+)(out). Its function is as follows. Produces ATP from ADP in the presence of a proton gradient across the membrane. The catalytic sites are hosted primarily by the beta subunits. The polypeptide is ATP synthase subunit beta, chloroplastic (Chaetosphaeridium globosum (Charophycean green alga)).